Here is a 430-residue protein sequence, read N- to C-terminus: Long-chain specific acyl-CoA dehydrogenase, mitochondrial (430 aa).

The N-terminal 30 residues, 1–30 (MAARLLRGSLRVLGGHRAPRQLPAARCSHS), are a transit peptide targeting the mitochondrion. Lys42 carries the N6-acetyllysine modification. Position 54 is a phosphoserine (Ser54). 2 positions are modified to N6-acetyllysine; alternate: Lys66 and Lys81. 2 positions are modified to N6-succinyllysine; alternate: Lys66 and Lys81. 2 positions are modified to N6-acetyllysine: Lys92 and Lys95. At Lys165 the chain carries N6-succinyllysine. FAD is bound by residues 170–179 (IAMTEPGAGS) and 203–205 (FIS). Substrate is bound at residue Ser179. Substrate is bound at residue 227–228 (AH). Lys240 is subject to N6-succinyllysine. N6-acetyllysine; alternate is present on residues Lys254 and Lys279. 2 positions are modified to N6-succinyllysine; alternate: Lys254 and Lys279. Substrate-binding positions include Tyr282 and 289–292 (PQER). Catalysis depends on Glu291, which acts as the Proton acceptor. Arg317 serves as a coordination point for FAD. Lys318 is modified (N6-acetyllysine). Lys322 is subject to N6-acetyllysine; alternate. Lys322 carries the N6-succinyllysine; alternate modification. Gln328 provides a ligand contact to FAD. At Lys358 the chain carries N6-acetyllysine. Phosphoserine is present on Ser362. 385 to 389 (QLHGG) serves as a coordination point for FAD. 412–413 (GG) is a binding site for substrate. FAD is bound at residue 414–416 (TNE).

This sequence belongs to the acyl-CoA dehydrogenase family. In terms of assembly, homotetramer. FAD serves as cofactor. Post-translationally, acetylation at Lys-318 and Lys-322 in proximity of the cofactor-binding sites strongly reduces catalytic activity. These sites are deacetylated by SIRT3.

It is found in the mitochondrion matrix. The enzyme catalyses a long-chain 2,3-saturated fatty acyl-CoA + oxidized [electron-transfer flavoprotein] + H(+) = a long-chain (2E)-enoyl-CoA + reduced [electron-transfer flavoprotein]. It catalyses the reaction hexanoyl-CoA + oxidized [electron-transfer flavoprotein] + H(+) = (2E)-hexenoyl-CoA + reduced [electron-transfer flavoprotein]. It carries out the reaction octanoyl-CoA + oxidized [electron-transfer flavoprotein] + H(+) = (2E)-octenoyl-CoA + reduced [electron-transfer flavoprotein]. The catalysed reaction is decanoyl-CoA + oxidized [electron-transfer flavoprotein] + H(+) = (2E)-decenoyl-CoA + reduced [electron-transfer flavoprotein]. The enzyme catalyses dodecanoyl-CoA + oxidized [electron-transfer flavoprotein] + H(+) = (2E)-dodecenoyl-CoA + reduced [electron-transfer flavoprotein]. It catalyses the reaction tetradecanoyl-CoA + oxidized [electron-transfer flavoprotein] + H(+) = (2E)-tetradecenoyl-CoA + reduced [electron-transfer flavoprotein]. It carries out the reaction oxidized [electron-transfer flavoprotein] + hexadecanoyl-CoA + H(+) = (2E)-hexadecenoyl-CoA + reduced [electron-transfer flavoprotein]. The catalysed reaction is octadecanoyl-CoA + oxidized [electron-transfer flavoprotein] + H(+) = (2E)-octadecenoyl-CoA + reduced [electron-transfer flavoprotein]. The enzyme catalyses eicosanoyl-CoA + oxidized [electron-transfer flavoprotein] + H(+) = (2E)-eicosenoyl-CoA + reduced [electron-transfer flavoprotein]. It catalyses the reaction docosanoyl-CoA + oxidized [electron-transfer flavoprotein] + H(+) = (2E)-docosenoyl-CoA + reduced [electron-transfer flavoprotein]. It carries out the reaction tetracosanoyl-CoA + oxidized [electron-transfer flavoprotein] + H(+) = (2E)-tetracosenoyl-CoA + reduced [electron-transfer flavoprotein]. The catalysed reaction is (5E)-tetradecenoyl-CoA + oxidized [electron-transfer flavoprotein] + H(+) = (2E,5E)-tetradecadienoyl-CoA + reduced [electron-transfer flavoprotein]. The enzyme catalyses (5Z)-tetradecenoyl-CoA + oxidized [electron-transfer flavoprotein] + H(+) = (2E,5Z)-tetradecadienoyl-CoA + reduced [electron-transfer flavoprotein]. It catalyses the reaction oxidized [electron-transfer flavoprotein] + (9Z)-octadecenoyl-CoA + H(+) = (2E,9Z)-octadecadienoyl-CoA + reduced [electron-transfer flavoprotein]. Its pathway is lipid metabolism; mitochondrial fatty acid beta-oxidation. Functionally, long-chain specific acyl-CoA dehydrogenase is one of the acyl-CoA dehydrogenases that catalyze the first step of mitochondrial fatty acid beta-oxidation, an aerobic process breaking down fatty acids into acetyl-CoA and allowing the production of energy from fats. The first step of fatty acid beta-oxidation consists in the removal of one hydrogen from C-2 and C-3 of the straight-chain fatty acyl-CoA thioester, resulting in the formation of trans-2-enoyl-CoA. Among the different mitochondrial acyl-CoA dehydrogenases, long-chain specific acyl-CoA dehydrogenase can act on saturated and unsaturated acyl-CoAs with 6 to 24 carbons with a preference for 8 to 18 carbons long primary chains. The protein is Long-chain specific acyl-CoA dehydrogenase, mitochondrial of Homo sapiens (Human).